The following is a 117-amino-acid chain: Large ribosomal subunit protein bL20 (117 aa).

This sequence belongs to the bacterial ribosomal protein bL20 family.

Functionally, binds directly to 23S ribosomal RNA and is necessary for the in vitro assembly process of the 50S ribosomal subunit. It is not involved in the protein synthesizing functions of that subunit. This chain is Large ribosomal subunit protein bL20, found in Rickettsia africae (strain ESF-5).